An 80-amino-acid polypeptide reads, in one-letter code: Large ribosomal subunit protein uL29 (80 aa).

The protein belongs to the universal ribosomal protein uL29 family.

This Saccharopolyspora erythraea (strain ATCC 11635 / DSM 40517 / JCM 4748 / NBRC 13426 / NCIMB 8594 / NRRL 2338) protein is Large ribosomal subunit protein uL29.